A 303-amino-acid chain; its full sequence is Glycine--tRNA ligase alpha subunit (303 aa).

It belongs to the class-II aminoacyl-tRNA synthetase family. Tetramer of two alpha and two beta subunits.

The protein resides in the cytoplasm. It carries out the reaction tRNA(Gly) + glycine + ATP = glycyl-tRNA(Gly) + AMP + diphosphate. The sequence is that of Glycine--tRNA ligase alpha subunit from Enterobacter sp. (strain 638).